The chain runs to 277 residues: Putative glucose-6-phosphate/phosphate-translocator-like protein 1 (277 aa).

Transmembrane regions (helical) follow at residues V8–L28, L46–V66, M124–F143, V153–F173, and P230–S250.

This sequence belongs to the TPT transporter family. GPT (TC 2.A.7.9) subfamily.

Its subcellular location is the membrane. The polypeptide is Putative glucose-6-phosphate/phosphate-translocator-like protein 1 (Arabidopsis thaliana (Mouse-ear cress)).